Reading from the N-terminus, the 184-residue chain is ATP synthase subunit b (184 aa).

A helical membrane pass occupies residues 15–34 (VQPGLIFWTLVTFVIAAVVL).

This sequence belongs to the ATPase B chain family. As to quaternary structure, F-type ATPases have 2 components, F(1) - the catalytic core - and F(0) - the membrane proton channel. F(1) has five subunits: alpha(3), beta(3), gamma(1), delta(1), epsilon(1). F(0) has three main subunits: a(1), b(2) and c(10-14). The alpha and beta chains form an alternating ring which encloses part of the gamma chain. F(1) is attached to F(0) by a central stalk formed by the gamma and epsilon chains, while a peripheral stalk is formed by the delta and b chains.

It localises to the cell inner membrane. F(1)F(0) ATP synthase produces ATP from ADP in the presence of a proton or sodium gradient. F-type ATPases consist of two structural domains, F(1) containing the extramembraneous catalytic core and F(0) containing the membrane proton channel, linked together by a central stalk and a peripheral stalk. During catalysis, ATP synthesis in the catalytic domain of F(1) is coupled via a rotary mechanism of the central stalk subunits to proton translocation. In terms of biological role, component of the F(0) channel, it forms part of the peripheral stalk, linking F(1) to F(0). The sequence is that of ATP synthase subunit b from Myxococcus xanthus (strain DK1622).